Here is a 696-residue protein sequence, read N- to C-terminus: Glycine--tRNA ligase beta subunit (696 aa).

This sequence belongs to the class-II aminoacyl-tRNA synthetase family. As to quaternary structure, tetramer of two alpha and two beta subunits.

It is found in the cytoplasm. The catalysed reaction is tRNA(Gly) + glycine + ATP = glycyl-tRNA(Gly) + AMP + diphosphate. The sequence is that of Glycine--tRNA ligase beta subunit from Nitratidesulfovibrio vulgaris (strain DP4) (Desulfovibrio vulgaris).